Reading from the N-terminus, the 22-residue chain is Polydim-I (22 aa).

As to expression, expressed by the venom gland.

The protein localises to the secreted. In terms of biological role, antibacterial peptide. Acts on the Mycobacterium abscessus subsp. massiliense cell wall. Reduces 40-50% of the bacterial load in macrophages infected with different M.abscessus strains. Is not cytotoxic towards mammalian cells, and shows no hemolytic activity against human erythrocytes. In vivo, reduces the bacterial load in the lungs, spleen, and liver of highly susceptible mice intravenously infected with M.abscessus. The chain is Polydim-I from Polybia dimorpha (Neotropical wasp).